A 336-amino-acid chain; its full sequence is Phospholipase A1 (336 aa).

The first 27 residues, 1-27, serve as a signal peptide directing secretion; sequence MEENMNLKYLLLFVYFVQVLNCCYGHG. Residues 28–36 constitute a propeptide that is removed on maturation; that stretch reads DPLSYELDR. A disulfide bond links Cys40 and Cys123. Ser173 (nucleophile) is an active-site residue. Asp201 (charge relay system) is an active-site residue. 2 disulfides stabilise this stretch: Cys212–Cys217 and Cys255–Cys263. The active-site Charge relay system is the His265. Intrachain disulfides connect Cys280–Cys304, Cys281–Cys329, and Cys297–Cys302.

It belongs to the AB hydrolase superfamily. Lipase family. Expressed by the venom gland.

The protein resides in the secreted. It catalyses the reaction a 1,2-diacyl-sn-glycero-3-phosphocholine + H2O = a 2-acyl-sn-glycero-3-phosphocholine + a fatty acid + H(+). Functionally, catalyzes the hydrolysis of phosphatidylcholine with phospholipase A1 activity. Induces hemolytic activity. Acts as an allergen. This chain is Phospholipase A1, found in Vespula vulgaris (Yellow jacket).